Here is a 248-residue protein sequence, read N- to C-terminus: Ribosomal RNA small subunit methyltransferase J (248 aa).

S-adenosyl-L-methionine-binding positions include 98 to 99 (RD), 114 to 115 (ER), 150 to 151 (SS), and D168.

Belongs to the methyltransferase superfamily. RsmJ family.

The protein resides in the cytoplasm. The catalysed reaction is guanosine(1516) in 16S rRNA + S-adenosyl-L-methionine = N(2)-methylguanosine(1516) in 16S rRNA + S-adenosyl-L-homocysteine + H(+). Its function is as follows. Specifically methylates the guanosine in position 1516 of 16S rRNA. The polypeptide is Ribosomal RNA small subunit methyltransferase J (Shewanella baltica (strain OS223)).